The chain runs to 259 residues: Zinc import ATP-binding protein ZnuC (259 aa).

The region spanning 22–238 (VEARGLTVRR…PEYRALFGAH (217 aa)) is the ABC transporter domain. 54 to 61 (GPNGSGKS) is a binding site for ATP.

Belongs to the ABC transporter superfamily. Zinc importer (TC 3.A.1.15.5) family. As to quaternary structure, the complex is composed of two ATP-binding proteins (ZnuC), two transmembrane proteins (ZnuB) and a solute-binding protein (ZnuA).

It localises to the cell inner membrane. It catalyses the reaction Zn(2+)(out) + ATP(in) + H2O(in) = Zn(2+)(in) + ADP(in) + phosphate(in) + H(+)(in). In terms of biological role, part of the ABC transporter complex ZnuABC involved in zinc import. Responsible for energy coupling to the transport system. This is Zinc import ATP-binding protein ZnuC from Alkalilimnicola ehrlichii (strain ATCC BAA-1101 / DSM 17681 / MLHE-1).